The primary structure comprises 49 residues: uncharacterized protein (49 aa).

A helical membrane pass occupies residues 16 to 36; the sequence is WTCHTGFYLMILLVLFFMYGF.

The protein resides in the cell membrane. This is an uncharacterized protein from Bacillus subtilis (strain 168).